The sequence spans 394 residues: Metal tolerance protein 11 (394 aa).

Topologically, residues 1-103 (MVEPASPDSD…EQDNLAKSET (103 aa)) are cytoplasmic. The helical transmembrane segment at 104-124 (LAIRISNIANMLLFAAKVYAS) threads the bilayer. Residues 125-130 (VTSGSL) are Vacuolar-facing. The helical transmembrane segment at 131–151 (AIIASTLDSLLDLLSGFILWF) threads the bilayer. Residues 152–172 (TAFSMQTPNPYQYPIGKKRMQ) lie on the Cytoplasmic side of the membrane. A helical membrane pass occupies residues 173–193 (PLGILVFASVMATLGLQIILE). At 194 to 212 (SLRTMLSSHKEFNLTKEQE) the chain is on the vacuolar side. The chain crosses the membrane as a helical span at residues 213–233 (SWVVGIMLSVTLVKLLLVLYC). Over 234-251 (RSFTNEIVKAYAQDHFFD) the chain is Cytoplasmic. Residues 252-272 (VITNIIGLIAVILANYIDYWI) form a helical membrane-spanning segment. Position 273 (D273) is a topological domain, vacuolar. A helical membrane pass occupies residues 274 to 294 (PVGAIILALYTIRTWSMTVLE). The Cytoplasmic segment spans residues 295–394 (NVNSLVGKSA…HKPEHARSHC (100 aa)).

This sequence belongs to the cation diffusion facilitator (CDF) transporter (TC 2.A.4) family. SLC30A subfamily. Widely expressed.

It localises to the prevacuolar compartment membrane. It is found in the golgi apparatus membrane. Its function is as follows. Cation/proton antiporter involved in endogenous manganese tolerance probably through vesicular trafficking and exocytosis. The chain is Metal tolerance protein 11 (MTP11) from Arabidopsis thaliana (Mouse-ear cress).